The chain runs to 167 residues: Centrin-3 (167 aa).

4 consecutive EF-hand domains span residues 25 to 60, 61 to 96, 98 to 133, and 134 to 167; these read EQKQ…LGFD, VKKA…WILE, DPHE…LGEN, and MSDE…TGDI. The Ca(2+) site is built by Asp38, Asp40, Asp42, and Glu49. A Phosphoserine modification is found at Ser135. Positions 147, 149, 151, 153, and 158 each coordinate Ca(2+).

It belongs to the centrin family. In terms of assembly, monomer. Component of the TREX-2 complex (transcription and export complex 2), composed of at least ENY2, GANP, PCID2, SEM1, and either centrin CETN2 or CETN3. Interacts with USP49.

The protein localises to the cytoplasm. It is found in the cytoskeleton. The protein resides in the microtubule organizing center. Its subcellular location is the centrosome. It localises to the nucleus. The protein localises to the nucleolus. It is found in the nucleus envelope. The protein resides in the nuclear pore complex. Its subcellular location is the centriole. Plays a fundamental role in microtubule-organizing center structure and function. Its function is as follows. As a component of the TREX-2 complex, involved in the export of mRNAs to the cytoplasm through the nuclear pores. This Mus musculus (Mouse) protein is Centrin-3 (Cetn3).